A 249-amino-acid polypeptide reads, in one-letter code: Uridylate kinase (249 aa).

Residue 19–22 participates in ATP binding; it reads KLSG. Gly61 lines the UMP pocket. ATP contacts are provided by Gly62 and Arg66. UMP contacts are provided by residues Asp81 and 142-149; that span reads TGNPYFTT. ATP-binding residues include Thr169, Tyr175, and Asp178.

Belongs to the UMP kinase family. In terms of assembly, homohexamer.

It is found in the cytoplasm. The enzyme catalyses UMP + ATP = UDP + ADP. Its pathway is pyrimidine metabolism; CTP biosynthesis via de novo pathway; UDP from UMP (UMPK route): step 1/1. Inhibited by UTP. In terms of biological role, catalyzes the reversible phosphorylation of UMP to UDP. This Anaeromyxobacter sp. (strain Fw109-5) protein is Uridylate kinase.